A 471-amino-acid chain; its full sequence is UTP--glucose-1-phosphate uridylyltransferase (471 aa).

Residues Leu87–Gly90, Lys101, Gln164, and Gly193 contribute to the UTP site. A substrate-binding site is contributed by Gly89–Gly90. Substrate contacts are provided by residues His194 and Asn222–Asp224. UTP is bound by residues Asp224 and Lys362.

It belongs to the UDPGP type 1 family.

It is found in the cytoplasm. It carries out the reaction alpha-D-glucose 1-phosphate + UTP + H(+) = UDP-alpha-D-glucose + diphosphate. Functionally, plays a central role as a glucosyl donor in cellular metabolic pathways. The polypeptide is UTP--glucose-1-phosphate uridylyltransferase (Pyrus pyrifolia (Chinese pear)).